Consider the following 174-residue polypeptide: Large ribosomal subunit protein bL12cy (174 aa).

The N-terminal 45 residues, 1–45, are a transit peptide targeting the chloroplast; the sequence is MASTTFSSAFSILSLPSSSPSPPPWAPRTLPVANRRRRAAAVAST.

This sequence belongs to the bacterial ribosomal protein bL12 family.

Its subcellular location is the plastid. The protein resides in the chloroplast. This chain is Large ribosomal subunit protein bL12cy (RPL12-2), found in Secale cereale (Rye).